The following is a 75-amino-acid chain: Dermaseptin-A3 (75 aa).

An N-terminal signal peptide occupies residues 1–22 (MAFLKKSLFLVLLLGLISLSIC). The propeptide occupies 23–43 (EEEKRENEVEEEQEDDEQSEL). Residue glutamine 72 is modified to Glutamine amide. Positions 74-75 (EQ) are excised as a propeptide.

Belongs to the frog skin active peptide (FSAP) family. Dermaseptin subfamily. In terms of tissue distribution, expressed by the skin glands.

The protein resides in the secreted. In terms of biological role, possesses a potent antimicrobial activity against Gram-positive and Gram-negative bacteria. Probably acts by disturbing membrane functions with its amphipathic structure. This is Dermaseptin-A3 from Agalychnis annae (Blue-sided leaf frog).